We begin with the raw amino-acid sequence, 172 residues long: 3-phenylpropionate/cinnamic acid dioxygenase subunit beta (172 aa).

The protein belongs to the bacterial ring-hydroxylating dioxygenase beta subunit family. As to quaternary structure, this dioxygenase system consists of four proteins: the two subunits of the hydroxylase component (HcaE and HcaF), a ferredoxin (HcaC) and a ferredoxin reductase (HcaD).

It carries out the reaction 3-phenylpropanoate + NADH + O2 + H(+) = 3-(cis-5,6-dihydroxycyclohexa-1,3-dien-1-yl)propanoate + NAD(+). The enzyme catalyses (E)-cinnamate + NADH + O2 + H(+) = (2E)-3-(cis-5,6-dihydroxycyclohexa-1,3-dien-1-yl)prop-2-enoate + NAD(+). The protein operates within aromatic compound metabolism; 3-phenylpropanoate degradation. Part of the multicomponent 3-phenylpropionate dioxygenase. Converts 3-phenylpropionic acid (PP) and cinnamic acid (CI) into 3-phenylpropionate-dihydrodiol (PP-dihydrodiol) and cinnamic acid-dihydrodiol (CI-dihydrodiol), respectively. The polypeptide is 3-phenylpropionate/cinnamic acid dioxygenase subunit beta (Escherichia coli O139:H28 (strain E24377A / ETEC)).